The following is a 484-amino-acid chain: Threonine synthase-like 2 (484 aa).

N6-(pyridoxal phosphate)lysine is present on lysine 113.

Belongs to the threonine synthase family. Pyridoxal 5'-phosphate is required as a cofactor.

Its subcellular location is the secreted. Its function is as follows. Acts as a catabolic phospho-lyase on both gamma- and beta-phosphorylated substrates. Degrades O-phospho-threonine (PThr) to alpha-ketobutyrate, ammonia and phosphate. Functionally, potent inducer of osteoblastic production of IL6. May act to exacerbate inflammation and/or bone turnover under inflammatory conditions. The chain is Threonine synthase-like 2 (THNSL2) from Homo sapiens (Human).